Here is a 465-residue protein sequence, read N- to C-terminus: Cysteine--tRNA ligase (465 aa).

C27 is a Zn(2+) binding site. Residues 29-39 (PTVYDDAHLGH) carry the 'HIGH' region motif. Residues C207, H237, and E241 each coordinate Zn(2+). A 'KMSKS' region motif is present at residues 269 to 273 (KMSKS). K272 is an ATP binding site.

This sequence belongs to the class-I aminoacyl-tRNA synthetase family. As to quaternary structure, monomer. It depends on Zn(2+) as a cofactor.

It is found in the cytoplasm. The enzyme catalyses tRNA(Cys) + L-cysteine + ATP = L-cysteinyl-tRNA(Cys) + AMP + diphosphate. The polypeptide is Cysteine--tRNA ligase (Helicobacter acinonychis (strain Sheeba)).